A 1530-amino-acid chain; its full sequence is Regulating synaptic membrane exocytosis protein 2 (1530 aa).

The segment at 1–34 is disordered; it reads MSAPLGPRGRPAPTPAASQPPPQPEMPDLSHLTE. Residues 10–25 are compositionally biased toward pro residues; that stretch reads RPAPTPAASQPPPQPE. In terms of domain architecture, RabBD spans 26–194; sequence MPDLSHLTEE…TKSGAWFYNS (169 aa). The FYVE-type zinc finger occupies 126–182; that stretch reads KGDAPTCGICHKTKFADGCGHNCSYCQTKFCARCGGRVSLRSNKVMWVCNLCRKQQE. Cys-132, Cys-135, Cys-148, Cys-151, Cys-156, Cys-159, Cys-174, and Cys-177 together coordinate Zn(2+). Disordered regions lie at residues 195–608 and 632–655; these read GSNT…ERQK and SGVD…HPVT. Composition is skewed to basic and acidic residues over residues 210-225, 327-338, 357-375, 391-410, and 419-443; these read LRNE…KLHE, EPGHLNYRDSNR, RDEY…RYRS, EQMR…RHSD, and EDSR…RRAA. Phosphoserine is present on Ser-409. A compositionally biased stretch (polar residues) spans 458–472; the sequence is AQGQSSYPQRTSNHS. The segment covering 484–501 has biased composition (basic and acidic residues); the sequence is DRPDMRRADSLRKQHHLD. Polar residues predominate over residues 519–530; that stretch reads RNDSLSSDQSES. Residues 537-546 are compositionally biased toward basic residues; sequence RPHKSKKGGK. The span at 567-577 shows a compositional bias: acidic residues; sequence SCDDVELESES. Basic and acidic residues-rich tracts occupy residues 578-592 and 643-653; these read VSEK…RKTS and NEEHSHSDKHP. The PDZ domain occupies 677-763; sequence DGSVPRDSGA…EPQVELVVSR (87 aa). Position 698 is a phosphothreonine (Thr-698). Residues 771 to 802 are disordered; that stretch reads IPDSTHAQLESSSSSFESQKMDRPSISVTSPM. Phosphoserine occurs at positions 800 and 803. One can recognise a C2 1 domain in the interval 814-937; the sequence is LSGQLSIKLW…ALLDDEPHWY (124 aa). Disordered regions lie at residues 948–982, 1003–1122, 1130–1149, 1154–1187, 1242–1263, and 1282–1307; these read PLPR…SEVS, LQSS…ERSA, RQMK…RLEQ, KYRS…SRTS, SLEK…TSGK, and KSRS…QRST. A compositionally biased stretch (polar residues) spans 1003–1024; the sequence is LQSSTLSVPEQVMSSNHCSPSG. Residues 1067–1086 are compositionally biased toward basic and acidic residues; sequence RMDRHRVMDDHYSSDRDRSH. Residues 1088 to 1101 show a composition bias toward polar residues; sequence RTGSVQTSPSSTPG. Residue Ser-1095 is modified to Phosphoserine. Positions 1154-1165 are enriched in basic and acidic residues; that stretch reads KYRSGWDPHRGA. At Ser-1175 the chain carries Phosphoserine. A compositionally biased stretch (low complexity) spans 1178–1187; sequence SDVSAVSRTS. The residue at position 1251 (Ser-1251) is a Phosphoserine. Positions 1376–1494 constitute a C2 2 domain; that stretch reads AMGDIQVGMM…ELSNMVIGWF (119 aa). A phosphoserine mark is found at Ser-1515 and Ser-1518.

In terms of assembly, interacts with TSPOAP1 and RIMBP2. Interacts with PPFIA3 and PPFIA4. Interacts via its zinc finger with the first C2 domain of UNC13A. Forms a complex consisting of UNC13A, RIMS2 and RAB3A. Heterodimer with PCLO. Part of a ternary complex involving PCLO and EPAC2. Interacts with RAB3A and RAB3B that have been activated by GTP-binding. Interacts with RAB3C, RAB3D and RAB26. In terms of tissue distribution, detected in testis, pituitary and an insulinoma cell line. Detected at low levels in cerebellar cortex.

Its subcellular location is the synapse. It localises to the synaptosome. Functionally, rab effector involved in exocytosis. May act as scaffold protein. Plays a role in dendrite formation by melanocytes. In Mus musculus (Mouse), this protein is Regulating synaptic membrane exocytosis protein 2 (Rims2).